We begin with the raw amino-acid sequence, 590 residues long: MATIVASKEFTGNPRRQLAKLFDVSLKLTVPDEPNVEPLIEPGKFGDYQCNNAMGLWSLIKGKGTQFRGPPAVGQALIQSLPTSEMVESCSIAGPGFVNVVLSSKWMAKSIENMLVDGIDTWAPTLSVKRAVVDFSSPNIAKEMHVGHLRSTIIGDTLARMLEYSKVEVLRRNHVGDWGTQFGMLIEFLFEKFPDTESVTETAIGDLQVFYRESKLKFDLNPEFKEKAQQAVVRLQGGDPVYRQAWAKICEISRNEFAKVYKRLRIELEEKGESFYNPYIANVIEELSSKGLVEESKGARVIFIEGFKIPLIVVKSDGGFNYASTDLTALWYRLNEEKAEWIIYVTDVGQQQHFDMFFKAARKAGWLPDDDKTYPRVSHVGFGLVLGDDNKRFRTRAAEVVRLADLLDEAKDRSKAALIERGKDKEWSPEELDQIAEAVGYGALKYADLKTNRITGYTFSFDQMLNDKGDTAVYLLYAHARICSIIRKSGKDIDELKKTGKIALDHAAERALGLHLLQFAETVEEACTTLLPNVLCKYLYYLSEEFTKFYSNCQVNGSAEETSRLLLCEATAIVMRKCFHLLGITPVYKL.

Position 2 is an N-acetylalanine (A2). L-arginine is bound by residues 137–139, H148, Y322, D326, and Q350; that span reads SPN. The 'HIGH' region motif lies at 138 to 149; the sequence is PNIAKEMHVGHL. Residues 470–484 form an interaction with tRNA region; the sequence is DTAVYLLYAHARICS.

It belongs to the class-I aminoacyl-tRNA synthetase family.

It localises to the cytoplasm. It is found in the cytosol. The enzyme catalyses tRNA(Arg) + L-arginine + ATP = L-arginyl-tRNA(Arg) + AMP + diphosphate. Functionally, forms part of a macromolecular complex that catalyzes the attachment of specific amino acids to cognate tRNAs during protein synthesis. In Arabidopsis thaliana (Mouse-ear cress), this protein is Arginine--tRNA ligase, cytoplasmic.